The sequence spans 310 residues: Coproporphyrin III ferrochelatase (310 aa).

Fe-coproporphyrin III is bound by residues Y13, R30, 46-47, S54, and Y125; that span reads RY. Fe(2+) contacts are provided by H181 and E262.

The protein belongs to the ferrochelatase family.

The protein localises to the cytoplasm. It carries out the reaction Fe-coproporphyrin III + 2 H(+) = coproporphyrin III + Fe(2+). The protein operates within porphyrin-containing compound metabolism; protoheme biosynthesis. Involved in coproporphyrin-dependent heme b biosynthesis. Catalyzes the insertion of ferrous iron into coproporphyrin III to form Fe-coproporphyrin III. The sequence is that of Coproporphyrin III ferrochelatase from Halalkalibacterium halodurans (strain ATCC BAA-125 / DSM 18197 / FERM 7344 / JCM 9153 / C-125) (Bacillus halodurans).